The primary structure comprises 306 residues: Curved DNA-binding protein (306 aa).

Residues 5–69 (DYYAIMGVKP…QRRAEYDQMW (65 aa)) enclose the J domain.

The protein localises to the cytoplasm. The protein resides in the nucleoid. In terms of biological role, DNA-binding protein that preferentially recognizes a curved DNA sequence. It is probably a functional analog of DnaJ; displays overlapping activities with DnaJ, but functions under different conditions, probably acting as a molecular chaperone in an adaptive response to environmental stresses other than heat shock. Lacks autonomous chaperone activity; binds native substrates and targets them for recognition by DnaK. Its activity is inhibited by the binding of CbpM. The chain is Curved DNA-binding protein from Escherichia coli O17:K52:H18 (strain UMN026 / ExPEC).